A 254-amino-acid chain; its full sequence is Protein N-terminal and lysine N-methyltransferase EFM7 (254 aa).

S-adenosyl-L-methionine is bound by residues Trp57, 84–86 (GAA), Asp106, Trp138, and Ser165.

It belongs to the class I-like SAM-binding methyltransferase superfamily. EFM7 family.

The protein localises to the cytoplasm. Its function is as follows. S-adenosyl-L-methionine-dependent protein methyltransferase that trimethylates the N-terminal glycine 'Gly-2' of elongation factor 1-alpha, before also catalyzing the mono- and dimethylation of 'Lys-3'. The protein is Protein N-terminal and lysine N-methyltransferase EFM7 of Debaryomyces hansenii (strain ATCC 36239 / CBS 767 / BCRC 21394 / JCM 1990 / NBRC 0083 / IGC 2968) (Yeast).